A 950-amino-acid polypeptide reads, in one-letter code: Xylosyltransferase 1 (950 aa).

Over 1–17 the chain is Cytoplasmic; it reads MVAAPSARRLVRRSHSA. Residues 18–38 form a helical; Signal-anchor for type II membrane protein membrane-spanning segment; the sequence is LLAALTVLLLQTLVGWNFSSL. The Lumenal portion of the chain corresponds to 39 to 950; it reads HSGAGERRGG…GAVKPDGRLR (912 aa). Residues 42–246 are disordered; that stretch reads AGERRGGAAA…ELRYDQPPKC (205 aa). Low complexity predominate over residues 91–104; the sequence is PPARARARALAGCP. Basic and acidic residues predominate over residues 134 to 150; the sequence is KVRTDSNNENSVPKDFE. Over residues 152–161 the composition is skewed to polar residues; that stretch reads VDNSNFAPRT. Residues 166–193 show a composition bias toward basic and acidic residues; that stretch reads HQPELAKKPPSRQKELLKRRLEQEEKGK. The N-linked (GlcNAc...) asparagine glycan is linked to N215. 4 disulfides stabilise this stretch: C246-C274, C290-C531, C550-C563, and C552-C561. Residues V322, D350, and 379–381 contribute to the UDP-alpha-D-xylose site; that span reads TIW. N410 carries an N-linked (GlcNAc...) asparagine glycan. 483–484 contributes to the UDP-alpha-D-xylose binding site; the sequence is DW. UDP-alpha-D-xylose-binding positions include S564 and 587 to 588; that span reads RK. 2 disulfide bridges follow: C664-C918 and C911-C924. An N-linked (GlcNAc...) asparagine glycan is attached at N768. The tract at residues 931 to 950 is disordered; that stretch reads SFSPDPKSELGAVKPDGRLR.

It belongs to the glycosyltransferase 14 family. XylT subfamily. Monomer. Requires a divalent metal cation as cofactor. In terms of processing, contains 7 disulfide bonds. N-glycosylated.

It is found in the golgi apparatus membrane. It catalyses the reaction UDP-alpha-D-xylose + L-seryl-[protein] = 3-O-(beta-D-xylosyl)-L-seryl-[protein] + UDP + H(+). The protein operates within glycan metabolism; chondroitin sulfate biosynthesis. It functions in the pathway glycan metabolism; heparan sulfate biosynthesis. Functionally, catalyzes the first step in the biosynthesis of chondroitin sulfate and dermatan sulfate proteoglycans, such as DCN. Transfers D-xylose from UDP-D-xylose to specific serine residues of the core protein. Required for normal maturation of chondrocytes during bone development, normal onset of ossification and normal embryonic and postnatal skeleton development, especially of the long bones. The sequence is that of Xylosyltransferase 1 (XYLT1) from Canis lupus familiaris (Dog).